The chain runs to 308 residues: N-acetylmuramic acid 6-phosphate etherase (308 aa).

The 164-residue stretch at 62–225 folds into the SIS domain; the sequence is ITDAFKVGGR…TTASMIRLGK (164 aa). Catalysis depends on glutamate 90, which acts as the Proton donor. The active site involves glutamate 121.

This sequence belongs to the GCKR-like family. MurNAc-6-P etherase subfamily. In terms of assembly, homodimer.

It catalyses the reaction N-acetyl-D-muramate 6-phosphate + H2O = N-acetyl-D-glucosamine 6-phosphate + (R)-lactate. Its pathway is amino-sugar metabolism; 1,6-anhydro-N-acetylmuramate degradation. The protein operates within amino-sugar metabolism; N-acetylmuramate degradation. It participates in cell wall biogenesis; peptidoglycan recycling. Functionally, specifically catalyzes the cleavage of the D-lactyl ether substituent of MurNAc 6-phosphate, producing GlcNAc 6-phosphate and D-lactate. Together with AnmK, is also required for the utilization of anhydro-N-acetylmuramic acid (anhMurNAc) either imported from the medium or derived from its own cell wall murein, and thus plays a role in cell wall recycling. The sequence is that of N-acetylmuramic acid 6-phosphate etherase from Vibrio campbellii (strain ATCC BAA-1116).